The sequence spans 467 residues: Acetaldehyde dehydrogenase (acetylating) EutE (467 aa).

A targets protein to the BMC region spans residues 1–19 (MNQQDIEQVVKAVLLKMKD).

Belongs to the EutE/PduP family. Interacts with EutS, which targets it to the interior of the BMC.

The protein localises to the bacterial microcompartment. It catalyses the reaction acetaldehyde + NAD(+) + CoA = acetyl-CoA + NADH + H(+). Its pathway is amine and polyamine degradation; ethanolamine degradation. Acts as the second step in ethanolamine degradation by converting acetaldehyde into acetyl-CoA. Has a very strong preference for NAD(+) over NADP(+) in both catalytic directions. May play a role in bacterial microcompartment (BMC) assembly or maintenance. Directly targeted to the BMC. In terms of biological role, expression of the eut operon allows this bacteria to use ethanolamine (EA) as a carbon, nitrogen and energy source. It relies on cobalamin (vitamin B12) both as a cofactor for the ethanolamine ammonia-lyase (EAL) activity and to induce the operon. EA enhances bacterial survival in macrophages in a concentration-dependent manner, suggesting it is an important nutrient during infection. The polypeptide is Acetaldehyde dehydrogenase (acetylating) EutE (Salmonella typhimurium (strain LT2 / SGSC1412 / ATCC 700720)).